We begin with the raw amino-acid sequence, 206 residues long: MARYLGPTCKLSRREGTDLFLKSGVRPLESKCKAETAPGQHGQRRGRLSDYGVQLREKQKVRRTYGLLEKQFRSYYKEAARLKGATGENLLKLLESRLDNVVYRMGFGATRAESRQLVSHKAILVNGKALNIPSYQVSEGDVIAVREKSKNQLRIQNALGIAAQRPDVEWVDVNADKKEGTFKRVPDRVDLPADINENLIVELYSK.

One can recognise an S4 RNA-binding domain in the interval 96-156; that stretch reads SRLDNVVYRM…EKSKNQLRIQ (61 aa).

The protein belongs to the universal ribosomal protein uS4 family. In terms of assembly, part of the 30S ribosomal subunit. Contacts protein S5. The interaction surface between S4 and S5 is involved in control of translational fidelity.

Functionally, one of the primary rRNA binding proteins, it binds directly to 16S rRNA where it nucleates assembly of the body of the 30S subunit. With S5 and S12 plays an important role in translational accuracy. The sequence is that of Small ribosomal subunit protein uS4 from Teredinibacter turnerae (strain ATCC 39867 / T7901).